The chain runs to 187 residues: NAC domain-containing protein 104 (187 aa).

Residues 3 to 155 (LPPGFRFFPT…KWVICRVYEQ (153 aa)) enclose the NAC domain. Residues 94–161 (VGIKKYLTFY…VYEQNCSEEE (68 aa)) mediate DNA binding. The segment at 118–142 (LPDSSSSSSRSSKRSSRASSSSHKP) is disordered.

Expressed in root xylem vessels. Expressed in stems, vascular tissue of cauline leaves and tracheary elements of sepals.

It is found in the nucleus. Functionally, probable transcription factor that influences tracheary elements and xylem development by negatively regulating secondary cell wall fiber synthesis and programmed cell death. In Arabidopsis thaliana (Mouse-ear cress), this protein is NAC domain-containing protein 104.